The primary structure comprises 379 residues: L-lactate dehydrogenase (379 aa).

In terms of domain architecture, FMN hydroxy acid dehydrogenase spans 1–379 (MIISSSTDYR…ITSELLVREP (379 aa)). Tyr-24 contributes to the substrate binding site. The FMN site is built by Ser-106 and Gln-127. Tyr-129 contributes to the substrate binding site. Thr-155 contacts FMN. Arg-164 is a substrate binding site. Lys-251 lines the FMN pocket. Catalysis depends on His-275, which acts as the Proton acceptor. Arg-278 contributes to the substrate binding site. An FMN-binding site is contributed by 306 to 330 (DSGIRSGLDVVRMIALGADAAMLGR).

This sequence belongs to the FMN-dependent alpha-hydroxy acid dehydrogenase family. FMN is required as a cofactor.

The protein localises to the cell membrane. It carries out the reaction (S)-lactate + A = pyruvate + AH2. Catalyzes the conversion of L-lactate to pyruvate. Is coupled to the respiratory chain. In Alcaligenes faecalis, this protein is L-lactate dehydrogenase.